A 270-amino-acid polypeptide reads, in one-letter code: UBX domain-containing protein 8 (270 aa).

A topological domain (cytoplasmic) is located at residue methionine 1. The helical transmembrane segment at 2-22 (ASRGVVGIFFLSAVPLVCLEL) threads the bilayer. Residues 23-33 (RRGIPDIGIKD) are Lumenal-facing. The helical transmembrane segment at 34–54 (FLLLCGRILLLLALLTLIISV) threads the bilayer. Topologically, residues 55–270 (TTSWLNSFKS…LILEEKEQTN (216 aa)) are cytoplasmic. The disordered stretch occupies residues 130-171 (SGHKLGGDEGTSQTSFETSNREAAKSQNLPKPLTEFPSPAEQ). The residue at position 167 (serine 167) is a Phosphoserine. In terms of domain architecture, UBX spans 187–263 (TAEEVVTVAL…GITVDTVLIL (77 aa)).

As to quaternary structure, interacts with SYVN1 and VCP. In terms of tissue distribution, expressed abundantly in ovary and testis, and weakly in all other tissues tested.

The protein resides in the endoplasmic reticulum membrane. Its function is as follows. Involved in endoplasmic reticulum-associated degradation (ERAD) for misfolded lumenal proteins, possibly by tethering VCP to the endoplasmic reticulum membrane. May play a role in reproduction. This chain is UBX domain-containing protein 8 (UBXN8), found in Homo sapiens (Human).